The chain runs to 303 residues: Tyrosine recombinase XerC (303 aa).

One can recognise a Core-binding (CB) domain in the interval 6-92 (ASLAPQVEAF…ALRSFLNWLV (87 aa)). The region spanning 113–292 (HLPKNIDVDE…DFQHLATVYD (180 aa)) is the Tyr recombinase domain. Residues R152, K176, H244, R247, and H270 contribute to the active site. The active-site O-(3'-phospho-DNA)-tyrosine intermediate is the Y279.

This sequence belongs to the 'phage' integrase family. XerC subfamily. As to quaternary structure, forms a cyclic heterotetrameric complex composed of two molecules of XerC and two molecules of XerD, in which XerC interacts with XerD via its C-terminal region, XerD interacts with XerC via its C-terminal region and so on.

It is found in the cytoplasm. Its activity is regulated as follows. FtsK may regulate the catalytic switch between XerC and XerD in the heterotetrameric complex during the two steps of the recombination process. Functionally, site-specific tyrosine recombinase, which acts by catalyzing the cutting and rejoining of the recombining DNA molecules. Binds cooperatively to specific DNA consensus sequences that are separated from XerD binding sites by a short central region, forming the heterotetrameric XerC-XerD complex that recombines DNA substrates. The complex is essential to convert dimers of the bacterial chromosome into monomers to permit their segregation at cell division. It also contributes to the segregational stability of plasmids. In the complex XerC specifically exchanges the top DNA strands. The sequence is that of Tyrosine recombinase XerC from Yersinia pestis.